The primary structure comprises 432 residues: UDP-N-acetylglucosamine 1-carboxyvinyltransferase (432 aa).

Residue lysine 22–asparagine 23 participates in phosphoenolpyruvate binding. Arginine 92 contacts UDP-N-acetyl-alpha-D-glucosamine. The Proton donor role is filled by cysteine 116. Residue cysteine 116 is modified to 2-(S-cysteinyl)pyruvic acid O-phosphothioketal. UDP-N-acetyl-alpha-D-glucosamine-binding positions include arginine 121–glutamine 125, aspartate 307, and isoleucine 329.

It belongs to the EPSP synthase family. MurA subfamily.

It is found in the cytoplasm. It catalyses the reaction phosphoenolpyruvate + UDP-N-acetyl-alpha-D-glucosamine = UDP-N-acetyl-3-O-(1-carboxyvinyl)-alpha-D-glucosamine + phosphate. Its pathway is cell wall biogenesis; peptidoglycan biosynthesis. Cell wall formation. Adds enolpyruvyl to UDP-N-acetylglucosamine. The polypeptide is UDP-N-acetylglucosamine 1-carboxyvinyltransferase (Psychrobacter sp. (strain PRwf-1)).